Here is a 104-residue protein sequence, read N- to C-terminus: Putative protein 22K (104 aa).

The segment at 35-104 is disordered; sequence YKQLEKELGE…KAPAAKAPSK (70 aa). Positions 60 to 78 are enriched in acidic residues; it reads PLSEGELEEISEEEEEEGE. Over residues 94–104 the composition is skewed to low complexity; sequence SKAPAAKAPSK.

The sequence is that of Putative protein 22K from Snake adenovirus serotype 1 (SnAdV-1).